Here is a 503-residue protein sequence, read N- to C-terminus: Annexin A11 (503 aa).

Composition is skewed to pro residues over residues 80–117 (GYPP…PGMP) and 123–167 (PGAP…PVPS). Residues 80 to 172 (GYPPVPPGGF…QPVPSYPGYS (93 aa)) are disordered. Annexin repeat units lie at residues 198 to 269 (FDPL…ALMK), 270 to 341 (TPVL…SLSQ), 353 to 425 (SLVQ…AVVK), and 429 to 500 (NTPA…KICG). 2 positions are modified to N6-acetyllysine: lysine 246 and lysine 253. The residue at position 477 (lysine 477) is an N6-acetyllysine.

This sequence belongs to the annexin family. In terms of assembly, interacts with S100A6. Interacts with PDCD6 in a calcium-dependent manner. Interacts with KIF23 during cytokinesis.

Its subcellular location is the cytoplasm. It localises to the melanosome. The protein resides in the nucleus envelope. The protein localises to the nucleus. It is found in the nucleoplasm. Its subcellular location is the cytoskeleton. It localises to the spindle. In terms of biological role, required for midbody formation and completion of the terminal phase of cytokinesis. Binds specifically to calcyclin in a calcium-dependent manner. In Mus musculus (Mouse), this protein is Annexin A11 (Anxa11).